Here is a 264-residue protein sequence, read N- to C-terminus: S-adenosylmethionine decarboxylase proenzyme (264 aa).

Residue serine 112 is the Schiff-base intermediate with substrate; via pyruvic acid of the active site. Residue serine 112 is modified to Pyruvic acid (Ser); by autocatalysis. The Proton acceptor; for processing activity role is filled by histidine 117. The active-site Proton donor; for catalytic activity is the cysteine 140.

The protein belongs to the prokaryotic AdoMetDC family. Type 2 subfamily. In terms of assembly, heterooctamer of four alpha and four beta chains arranged as a tetramer of alpha/beta heterodimers. The cofactor is pyruvate. Post-translationally, is synthesized initially as an inactive proenzyme. Formation of the active enzyme involves a self-maturation process in which the active site pyruvoyl group is generated from an internal serine residue via an autocatalytic post-translational modification. Two non-identical subunits are generated from the proenzyme in this reaction, and the pyruvate is formed at the N-terminus of the alpha chain, which is derived from the carboxyl end of the proenzyme. The post-translation cleavage follows an unusual pathway, termed non-hydrolytic serinolysis, in which the side chain hydroxyl group of the serine supplies its oxygen atom to form the C-terminus of the beta chain, while the remainder of the serine residue undergoes an oxidative deamination to produce ammonia and the pyruvoyl group blocking the N-terminus of the alpha chain.

The catalysed reaction is S-adenosyl-L-methionine + H(+) = S-adenosyl 3-(methylsulfanyl)propylamine + CO2. Its pathway is amine and polyamine biosynthesis; S-adenosylmethioninamine biosynthesis; S-adenosylmethioninamine from S-adenosyl-L-methionine: step 1/1. Functionally, catalyzes the decarboxylation of S-adenosylmethionine to S-adenosylmethioninamine (dcAdoMet), the propylamine donor required for the synthesis of the polyamines spermine and spermidine from the diamine putrescine. The chain is S-adenosylmethionine decarboxylase proenzyme from Photorhabdus laumondii subsp. laumondii (strain DSM 15139 / CIP 105565 / TT01) (Photorhabdus luminescens subsp. laumondii).